A 306-amino-acid chain; its full sequence is Curved DNA-binding protein (306 aa).

Positions 5–69 (DYYAIMGVKP…QRRAEYDQLW (65 aa)) constitute a J domain.

It is found in the cytoplasm. Its subcellular location is the nucleoid. In terms of biological role, DNA-binding protein that preferentially recognizes a curved DNA sequence. It is probably a functional analog of DnaJ; displays overlapping activities with DnaJ, but functions under different conditions, probably acting as a molecular chaperone in an adaptive response to environmental stresses other than heat shock. Lacks autonomous chaperone activity; binds native substrates and targets them for recognition by DnaK. Its activity is inhibited by the binding of CbpM. The polypeptide is Curved DNA-binding protein (Salmonella arizonae (strain ATCC BAA-731 / CDC346-86 / RSK2980)).